The following is a 450-amino-acid chain: Folate synthesis bifunctional protein (450 aa).

The HPPK stretch occupies residues 1–166 (MTSWNFVCLS…TFAELAAIYP (166 aa)). The Pterin-binding domain maps to 180–441 (TQIMGIVNIT…QVEGNRRALA (262 aa)). The segment at 182–450 (IMGIVNITDN…AAAAWAGMFV (269 aa)) is DHPS. Asn-187 is a binding site for Mg(2+). (7,8-dihydropterin-6-yl)methyl diphosphate contacts are provided by residues Thr-227, Asp-267, Asn-287, Asp-358, Lys-395, and 429–431 (RVH).

It in the C-terminal section; belongs to the DHPS family. This sequence in the N-terminal section; belongs to the HPPK family. Mg(2+) serves as cofactor.

It catalyses the reaction 6-hydroxymethyl-7,8-dihydropterin + ATP = (7,8-dihydropterin-6-yl)methyl diphosphate + AMP + H(+). The catalysed reaction is (7,8-dihydropterin-6-yl)methyl diphosphate + 4-aminobenzoate = 7,8-dihydropteroate + diphosphate. It participates in cofactor biosynthesis; tetrahydrofolate biosynthesis; 2-amino-4-hydroxy-6-hydroxymethyl-7,8-dihydropteridine diphosphate from 7,8-dihydroneopterin triphosphate: step 4/4. The protein operates within cofactor biosynthesis; tetrahydrofolate biosynthesis; 7,8-dihydrofolate from 2-amino-4-hydroxy-6-hydroxymethyl-7,8-dihydropteridine diphosphate and 4-aminobenzoate: step 1/2. The sequence is that of Folate synthesis bifunctional protein (folKP) from Chlamydia trachomatis serovar D (strain ATCC VR-885 / DSM 19411 / UW-3/Cx).